A 510-amino-acid polypeptide reads, in one-letter code: Probable cytosol aminopeptidase (510 aa).

Mn(2+) contacts are provided by Lys282 and Asp287. The active site involves Lys294. The Mn(2+) site is built by Asp305, Asp364, and Glu366. Residue Arg368 is part of the active site.

Belongs to the peptidase M17 family. It depends on Mn(2+) as a cofactor.

It localises to the cytoplasm. It carries out the reaction Release of an N-terminal amino acid, Xaa-|-Yaa-, in which Xaa is preferably Leu, but may be other amino acids including Pro although not Arg or Lys, and Yaa may be Pro. Amino acid amides and methyl esters are also readily hydrolyzed, but rates on arylamides are exceedingly low.. The catalysed reaction is Release of an N-terminal amino acid, preferentially leucine, but not glutamic or aspartic acids.. Functionally, presumably involved in the processing and regular turnover of intracellular proteins. Catalyzes the removal of unsubstituted N-terminal amino acids from various peptides. The protein is Probable cytosol aminopeptidase of Cupriavidus pinatubonensis (strain JMP 134 / LMG 1197) (Cupriavidus necator (strain JMP 134)).